A 359-amino-acid chain; its full sequence is Carbamoyl phosphate synthase small chain (359 aa).

Residues 1-169 (MTKRILVLED…TKTSYPAPGV (169 aa)) form a CPSase region. L-glutamine-binding residues include Ser46, Gly220, and Gly222. Residues 172–358 (SVVLVDFGLK…IEMMEVFKQS (187 aa)) form the Glutamine amidotransferase type-1 domain. Catalysis depends on Cys247, which acts as the Nucleophile. L-glutamine is bound by residues Met248, Gln251, Asn289, Gly291, and Tyr292. Residues His331 and Asp333 contribute to the active site.

It belongs to the CarA family. As to quaternary structure, composed of two chains; the small (or glutamine) chain promotes the hydrolysis of glutamine to ammonia, which is used by the large (or ammonia) chain to synthesize carbamoyl phosphate. Tetramer of heterodimers (alpha,beta)4.

The catalysed reaction is hydrogencarbonate + L-glutamine + 2 ATP + H2O = carbamoyl phosphate + L-glutamate + 2 ADP + phosphate + 2 H(+). The enzyme catalyses L-glutamine + H2O = L-glutamate + NH4(+). Its pathway is amino-acid biosynthesis; L-arginine biosynthesis; carbamoyl phosphate from bicarbonate: step 1/1. It participates in pyrimidine metabolism; UMP biosynthesis via de novo pathway; (S)-dihydroorotate from bicarbonate: step 1/3. Its function is as follows. Small subunit of the glutamine-dependent carbamoyl phosphate synthetase (CPSase). CPSase catalyzes the formation of carbamoyl phosphate from the ammonia moiety of glutamine, carbonate, and phosphate donated by ATP, constituting the first step of 2 biosynthetic pathways, one leading to arginine and/or urea and the other to pyrimidine nucleotides. The small subunit (glutamine amidotransferase) binds and cleaves glutamine to supply the large subunit with the substrate ammonia. The chain is Carbamoyl phosphate synthase small chain from Streptococcus pneumoniae (strain ATCC BAA-255 / R6).